The primary structure comprises 177 residues: Bifunctional protein PyrR (177 aa).

The PRPP-binding signature appears at Val-99–Thr-111.

Belongs to the purine/pyrimidine phosphoribosyltransferase family. PyrR subfamily. As to quaternary structure, homodimer and homohexamer; in equilibrium.

The catalysed reaction is UMP + diphosphate = 5-phospho-alpha-D-ribose 1-diphosphate + uracil. In terms of biological role, regulates transcriptional attenuation of the pyrimidine nucleotide (pyr) operon by binding in a uridine-dependent manner to specific sites on pyr mRNA. This disrupts an antiterminator hairpin in the RNA and favors formation of a downstream transcription terminator, leading to a reduced expression of downstream genes. Functionally, also displays a weak uracil phosphoribosyltransferase activity which is not physiologically significant. The sequence is that of Bifunctional protein PyrR from Clostridioides difficile (strain 630) (Peptoclostridium difficile).